The sequence spans 322 residues: Sideroflexin-2 (322 aa).

Methionine 1 carries the N-acetylmethionine modification. 5 helical membrane-spanning segments follow: residues 99–119 (GMLITGFMLQFYRTMPAVIFW), 147–167 (ALSYFTATTTAVATAVGMNMW), 174–194 (LVGRWVPFAAVAAANCVNIPM), 223–243 (VGIAQVVISRITMAAPGMILL), and 266–286 (LQVLLCGCFLLFMVPVACGLF).

The protein belongs to the sideroflexin family. In terms of tissue distribution, expressed in brain, heart, kidney, spleen, thymus, liver, stomach and skin.

The protein localises to the mitochondrion inner membrane. Its subcellular location is the mitochondrion outer membrane. It catalyses the reaction L-serine(in) = L-serine(out). Mitochondrial amino-acid transporter that mediates transport of serine into mitochondria. Involved in mitochondrial iron homeostasis by regulating heme biosynthesis. The polypeptide is Sideroflexin-2 (Mus musculus (Mouse)).